The primary structure comprises 177 residues: ATP synthase subunit delta 1 (177 aa).

It belongs to the ATPase delta chain family. F-type ATPases have 2 components, F(1) - the catalytic core - and F(0) - the membrane proton channel. F(1) has five subunits: alpha(3), beta(3), gamma(1), delta(1), epsilon(1). F(0) has three main subunits: a(1), b(2) and c(10-14). The alpha and beta chains form an alternating ring which encloses part of the gamma chain. F(1) is attached to F(0) by a central stalk formed by the gamma and epsilon chains, while a peripheral stalk is formed by the delta and b chains.

The protein resides in the cell inner membrane. Its function is as follows. F(1)F(0) ATP synthase produces ATP from ADP in the presence of a proton or sodium gradient. F-type ATPases consist of two structural domains, F(1) containing the extramembraneous catalytic core and F(0) containing the membrane proton channel, linked together by a central stalk and a peripheral stalk. During catalysis, ATP synthesis in the catalytic domain of F(1) is coupled via a rotary mechanism of the central stalk subunits to proton translocation. Functionally, this protein is part of the stalk that links CF(0) to CF(1). It either transmits conformational changes from CF(0) to CF(1) or is implicated in proton conduction. This Photobacterium profundum (strain SS9) protein is ATP synthase subunit delta 1.